The primary structure comprises 479 residues: 5-hydroxytryptamine receptor 2B (479 aa).

Residues methionine 1–tryptophan 55 are Extracellular-facing. A helical membrane pass occupies residues alanine 56–valine 78. Topologically, residues serine 79 to asparagine 89 are cytoplasmic. A helical membrane pass occupies residues tyrosine 90–leucine 112. Over threonine 113–proline 128 the chain is Extracellular. Cysteines 127 and 206 form a disulfide. A helical membrane pass occupies residues alanine 129 to leucine 150. Ergotamine contacts are provided by aspartate 134 and threonine 139. Residues aspartate 151–tyrosine 153 carry the DRY motif; important for ligand-induced conformation changes motif. Over aspartate 151–threonine 170 the chain is Cytoplasmic. A helical transmembrane segment spans residues alanine 171–isoleucine 191. Over lysine 192–serine 215 the chain is Extracellular. N-linked (GlcNAc...) asparagine glycosylation is present at asparagine 203. Leucine 208 is a binding site for ergotamine. The [DE]RFG motif; may stabilize a conformation that preferentially activates signaling via beta-arrestin family members motif lies at aspartate 211–glycine 214. A helical membrane pass occupies residues phenylalanine 216–leucine 238. Residues threonine 239 to lysine 323 lie on the Cytoplasmic side of the membrane. The chain crosses the membrane as a helical span at residues valine 324–valine 344. The Extracellular portion of the chain corresponds to threonine 345–threonine 359. Cysteine 349 and cysteine 352 form a disulfide bridge. N-linked (GlcNAc...) asparagine glycosylation is present at asparagine 353. A helical transmembrane segment spans residues leucine 360–leucine 381. The short motif at asparagine 375–tyrosine 379 is the NPxxY motif; important for ligand-induced conformation changes and signaling element. The Cytoplasmic portion of the chain corresponds to phenylalanine 382–isoleucine 479. Cysteine 396 carries S-palmitoyl cysteine lipidation. The short motif at serine 477–isoleucine 479 is the PDZ-binding element.

It belongs to the G-protein coupled receptor 1 family. In terms of assembly, interacts (via C-terminus) with MPDZ. Stomach fundus.

The protein resides in the cell membrane. It localises to the synapse. It is found in the synaptosome. In terms of biological role, G-protein coupled receptor for 5-hydroxytryptamine (serotonin). Also functions as a receptor for various ergot alkaloid derivatives and psychoactive substances. Ligand binding causes a conformation change that triggers signaling via guanine nucleotide-binding proteins (G proteins) and modulates the activity of downstream effectors. HTR2B is coupled to G(q)/G(11) G alpha proteins and activates phospholipase C-beta, releasing diacylglycerol (DAG) and inositol 1,4,5-trisphosphate (IP3) second messengers that modulate the activity of phosphatidylinositol 3-kinase and promote the release of Ca(2+) ions from intracellular stores, respectively. Beta-arrestin family members inhibit signaling via G proteins and mediate activation of alternative signaling pathways. Plays a role in the regulation of dopamine and 5-hydroxytryptamine release, 5-hydroxytryptamine uptake and in the regulation of extracellular dopamine and 5-hydroxytryptamine levels, and thereby affects neural activity. May play a role in the perception of pain. Plays a role in the regulation of behavior, including impulsive behavior. Required for normal proliferation of embryonic cardiac myocytes and normal heart development. Protects cardiomyocytes against apoptosis. Plays a role in the adaptation of pulmonary arteries to chronic hypoxia. Plays a role in vasoconstriction. Required for normal osteoblast function and proliferation, and for maintaining normal bone density. Required for normal proliferation of the interstitial cells of Cajal in the intestine. This is 5-hydroxytryptamine receptor 2B (Htr2b) from Rattus norvegicus (Rat).